A 1194-amino-acid polypeptide reads, in one-letter code: Cohesin subunit SA-2 (1194 aa).

In terms of domain architecture, SCD spans Phe-224–Met-309. Residues Asp-986–Met-1027 are disordered. Low complexity predominate over residues Met-988–Thr-1001. A compositionally biased stretch (basic residues) spans Arg-1002–Arg-1013.

The protein belongs to the SCC3 family. As to quaternary structure, part of the cohesin complex which is composed of a heterodimer between a SMC1 protein (SMC1A or SMC1B) and SMC3, which are attached via their hinge domain, and RAD21 which link them at their heads, and one STAG protein (STAG1, STAG2 or STAG3). In cohesin complexes, STAG2 is mutually exclusive with STAG1 and STAG3. Interacts directly with RAD21 in cohesin complex. Post-translationally, phosphorylated by PLK1. The large dissociation of cohesin from chromosome arms during prophase is partly due to its phosphorylation.

The protein localises to the nucleus. It is found in the chromosome. The protein resides in the centromere. Its function is as follows. Component of cohesin complex, a complex required for the cohesion of sister chromatids after DNA replication. The cohesin complex apparently forms a large proteinaceous ring within which sister chromatids can be trapped. At anaphase, the complex is cleaved and dissociates from chromatin, allowing sister chromatids to segregate. The cohesin complex may also play a role in spindle pole assembly during mitosis. The protein is Cohesin subunit SA-2 (stag2) of Xenopus laevis (African clawed frog).